The sequence spans 716 residues: 1,4-alpha-glucan branching enzyme GlgB (716 aa).

Asp399 acts as the Nucleophile in catalysis. Glu452 (proton donor) is an active-site residue.

The protein belongs to the glycosyl hydrolase 13 family. GlgB subfamily. In terms of assembly, monomer.

It carries out the reaction Transfers a segment of a (1-&gt;4)-alpha-D-glucan chain to a primary hydroxy group in a similar glucan chain.. It participates in glycan biosynthesis; glycogen biosynthesis. Catalyzes the formation of the alpha-1,6-glucosidic linkages in glycogen by scission of a 1,4-alpha-linked oligosaccharide from growing alpha-1,4-glucan chains and the subsequent attachment of the oligosaccharide to the alpha-1,6 position. In Rhodopseudomonas palustris (strain ATCC BAA-98 / CGA009), this protein is 1,4-alpha-glucan branching enzyme GlgB.